The sequence spans 369 residues: CLIP domain-containing serine protease HP8 (369 aa).

Positions Met-1–Gly-24 are cleaved as a signal peptide. The propeptide occupies Gln-25 to Ala-81. Residues Lys-26–Cys-75 enclose the Clip domain. Cystine bridges form between Cys-27–Cys-74, Cys-33–Cys-63, Cys-39–Cys-75, Cys-105–Cys-239, Cys-142–Cys-158, Cys-186–Cys-191, Cys-286–Cys-303, and Cys-313–Cys-344. The 256-residue stretch at Ile-113–Glu-368 folds into the Peptidase S1 domain. His-157 serves as the catalytic Charge relay system. Ca(2+) contacts are provided by Glu-177, Asn-179, Thr-182, and Asp-185. Residue Asn-179 is glycosylated (N-linked (GlcNAc...) asparagine). Asp-219 (charge relay system) is an active-site residue. Ser-317 acts as the Charge relay system in catalysis.

The protein belongs to the peptidase S1 family. CLIP subfamily. In terms of assembly, in the active form, heterodimer of a light chain and a heavy chain; disulfide-linked. Proteolytically cleaved for activation. Cleavage produces a light chain and a catalytic heavy chain which remains covalently associated probably through an interchain disulfide bond. In larvae, expressed in the fat body and hemocytes.

It localises to the secreted. The protein localises to the cytoplasm. Inhibited by (p-amidinophenyl) methanesulfonyl fluoride, p-nitrophenyl-p'-guanidinobenzoate, D-phenylalanyl-L-prolyl-L-arginyl chloromethane, leupeptin, antipain and to a lesser extent by antithrombin III. Functionally, endopeptidase with selective post-Arg cleavage site. Functions in the innate immune response to fungal and Gram-positive bacterial infections. Upon pathogen infection promotes nodulation; a cellular defense response in which hemocytes surround and isolate invading pathogens forming aggregates called nodules. Involved in activating nodule formation in response to infection with M.luteus, E.coli or S.cerevisiae. Able to bind the microbes M.luteus, E.coli or S.cerevisiae. According to another report, does not bind microorganisms. This chain is CLIP domain-containing serine protease HP8, found in Bombyx mori (Silk moth).